A 138-amino-acid polypeptide reads, in one-letter code: Transcription antitermination protein NusB (138 aa).

The protein belongs to the NusB family.

In terms of biological role, involved in transcription antitermination. Required for transcription of ribosomal RNA (rRNA) genes. Binds specifically to the boxA antiterminator sequence of the ribosomal RNA (rrn) operons. This is Transcription antitermination protein NusB from Helicobacter pylori (strain G27).